The following is a 215-amino-acid chain: Large ribosomal subunit protein uL16 (215 aa).

Belongs to the universal ribosomal protein uL16 family. Component of the large ribosomal subunit.

Its subcellular location is the cytoplasm. Its function is as follows. Component of the large ribosomal subunit. Plays a role in the formation of actively translating ribosomes. Plays a role in the embryonic brain development. The chain is Large ribosomal subunit protein uL16 from Danio rerio (Zebrafish).